A 535-amino-acid chain; its full sequence is Dimethylaniline monooxygenase [N-oxide-forming] 2 (535 aa).

FAD contacts are provided by residues 9–13, glutamate 32, 40–41, and 61–62; these read GAGVS, LW, and NT. NADP(+)-binding positions include 60-61 and 195-198; these read TN and SAAD. Lysine 492 is covalently cross-linked (Glycyl lysine isopeptide (Lys-Gly) (interchain with G-Cter in SUMO)). A helical transmembrane segment spans residues 510–530; the sequence is APVSFLIKVLGLLAIVLAFFF.

The protein belongs to the FMO family. FAD serves as cofactor. It depends on Mg(2+) as a cofactor.

It is found in the microsome membrane. The protein localises to the endoplasmic reticulum membrane. Its function is as follows. Catalyzes the oxidative metabolism of numerous xenobiotics, including mainly therapeutic drugs and insecticides that contain a soft nucleophile, most commonly nitrogen and sulfur and participates to their bioactivation. This is Dimethylaniline monooxygenase [N-oxide-forming] 2 from Rattus norvegicus (Rat).